Here is a 117-residue protein sequence, read N- to C-terminus: V-type proton ATPase subunit G (117 aa).

The protein belongs to the V-ATPase G subunit family. As to quaternary structure, V-ATPase is a heteromultimeric enzyme made up of two complexes: the ATP-hydrolytic V1 complex and the proton translocation V0 complex. The V1 complex consists of three catalytic AB heterodimers that form a heterohexamer, three peripheral stalks each consisting of EG heterodimers, one central rotor including subunits D and F, and the regulatory subunits C and H. The proton translocation complex V0 consists of the proton transport subunit a, a ring of proteolipid subunits c9c'', rotary subunit d, subunits e and f, and the accessory subunits VhaAC45 and ATP6AP2.

Subunit of the V1 complex of vacuolar(H+)-ATPase (V-ATPase), a multisubunit enzyme composed of a peripheral complex (V1) that hydrolyzes ATP and a membrane integral complex (V0) that translocates protons. V-ATPase is responsible for acidifying and maintaining the pH of intracellular compartments and in some cell types, is targeted to the plasma membrane, where it is responsible for acidifying the extracellular environment. In enterocytes, acts as part of a pHCl-2 sensory pathway which mediates Tor-dependent larval growth and metabolism in response to zinc availability. Likely acts in maintaining enterocyte lysosomal acidification which consequently promotes Tor activation at the lysosome membrane. The polypeptide is V-type proton ATPase subunit G (Vha13) (Drosophila melanogaster (Fruit fly)).